The primary structure comprises 397 residues: Mannonate dehydratase 2 (397 aa).

Belongs to the mannonate dehydratase family. The cofactor is Fe(2+). Mn(2+) is required as a cofactor.

It catalyses the reaction D-mannonate = 2-dehydro-3-deoxy-D-gluconate + H2O. It functions in the pathway carbohydrate metabolism; pentose and glucuronate interconversion. In terms of biological role, catalyzes the dehydration of D-mannonate. The sequence is that of Mannonate dehydratase 2 (uxuA2) from Agrobacterium fabrum (strain C58 / ATCC 33970) (Agrobacterium tumefaciens (strain C58)).